The primary structure comprises 353 residues: Mitochondrial ubiquitin ligase activator of nfkb 1 (353 aa).

The Cytoplasmic portion of the chain corresponds to 1–8 (MENGGRPS). A helical membrane pass occupies residues 9 to 29 (VGQVILLTTSSAITALFYSIY). The Mitochondrial intermembrane segment spans residues 30 to 239 (RHKYRSVQTL…LLEKQEVQMR (210 aa)). A helical transmembrane segment spans residues 240 to 260 (WWRILSIVFGVASCITLFFIL). At 261 to 353 (RRKYRHYKEK…IDRIVPLYNS (93 aa)) the chain is on the cytoplasmic side. The segment at 303 to 341 (CSICLSTEKSCVFLECGHVCSCISCYQALPSPKKCPICR) adopts an RING-type zinc-finger fold.

In terms of assembly, homooligomer.

The protein resides in the mitochondrion outer membrane. The catalysed reaction is S-ubiquitinyl-[E2 ubiquitin-conjugating enzyme]-L-cysteine + [acceptor protein]-L-lysine = [E2 ubiquitin-conjugating enzyme]-L-cysteine + N(6)-ubiquitinyl-[acceptor protein]-L-lysine.. It functions in the pathway protein modification; protein ubiquitination. Its function is as follows. E3 ubiquitin-protein ligase that plays a role in the control of mitochondrial morphology. Promotes mitochondrial fragmentation and influences mitochondrial localization. Inhibits cell growth. E3 ubiquitin ligases accept ubiquitin from an E2 ubiquitin-conjugating enzyme in the form of a thioester and then directly transfer the ubiquitin to targeted substrates. The polypeptide is Mitochondrial ubiquitin ligase activator of nfkb 1 (mul1) (Xenopus laevis (African clawed frog)).